Here is a 459-residue protein sequence, read N- to C-terminus: Phosphoenolpyruvate carboxylase (459 aa).

Belongs to the PEPCase type 2 family. Homotetramer. The cofactor is Mg(2+).

The enzyme catalyses oxaloacetate + phosphate = phosphoenolpyruvate + hydrogencarbonate. Its function is as follows. Catalyzes the irreversible beta-carboxylation of phosphoenolpyruvate (PEP) to form oxaloacetate (OAA), a four-carbon dicarboxylic acid source for the tricarboxylic acid cycle. The protein is Phosphoenolpyruvate carboxylase of Pyrobaculum calidifontis (strain DSM 21063 / JCM 11548 / VA1).